The primary structure comprises 395 residues: Elongation factor Tu (395 aa).

One can recognise a tr-type G domain in the interval 6–205 (KPHINVGTIG…NALEKIDLPI (200 aa)). Residues 15–22 (GHVDHGKT) form a G1 region. Residue 15 to 22 (GHVDHGKT) coordinates GTP. A Mg(2+)-binding site is contributed by Thr-22. Positions 59–63 (GITIS) are G2. The interval 80–83 (DCPG) is G3. GTP contacts are provided by residues 80-84 (DCPGH) and 135-138 (NKCD). Residues 135-138 (NKCD) are G4. Residues 173–175 (SAV) form a G5 region.

It belongs to the TRAFAC class translation factor GTPase superfamily. Classic translation factor GTPase family. EF-Tu/EF-1A subfamily. In terms of assembly, monomer.

It localises to the cytoplasm. It catalyses the reaction GTP + H2O = GDP + phosphate + H(+). Its function is as follows. GTP hydrolase that promotes the GTP-dependent binding of aminoacyl-tRNA to the A-site of ribosomes during protein biosynthesis. The sequence is that of Elongation factor Tu from Ehrlichia ruminantium (strain Gardel).